A 712-amino-acid chain; its full sequence is Phosphatase and actin regulator 4 (712 aa).

Disordered regions lie at residues 1-22 and 90-405; these read MGQA…GQPT and RGLL…EVPK. One copy of the RPEL 1 repeat lies at 72–97; that stretch reads EVLERKISMRKPREELVKRGLLLEDS. Positions 114-124 are enriched in polar residues; sequence NGHTTLIGSTR. A phosphoserine mark is found at serine 125, serine 127, serine 140, and serine 156. Positions 136–152 are enriched in basic and acidic residues; sequence ERIASLRKPVPEEEPKK. Residues 198–230 show a composition bias toward low complexity; sequence ATSSGSLARPSSSASTTAITTAPAATMAATNPA. A compositionally biased stretch (polar residues) spans 233 to 243; sequence VHSSGPPSQAP. Low complexity predominate over residues 245-267; that stretch reads TLPAAPASTHTTATLSLTHTGPA. Phosphoserine is present on residues serine 282, serine 303, and serine 353. Low complexity predominate over residues 345–357; that stretch reads SEPLLTPSSSPLP. The span at 358 to 371 shows a compositional bias: pro residues; sequence AHIPPEPPQSPPFP. At serine 436 the chain carries Phosphoserine. A Phosphothreonine modification is found at threonine 441. Residues serine 452, serine 462, serine 473, serine 524, serine 526, serine 567, and serine 600 each carry the phosphoserine modification. The disordered stretch occupies residues 507–557; it reads VIPKLPQCLQEEEEGKESDSDSEGPIQYRDEEDEDESHHSALANKVKRKDT. Positions 516-528 are enriched in acidic residues; it reads QEEEEGKESDSDS. RPEL repeat units lie at residues 593 to 618 and 631 to 656; these read NTLI…QPKN and RRLT…RFNE. The interval 602 to 626 is disordered; sequence RPTPEELEQRNILQPKNEADRQAEK. The residue at position 638 (serine 638) is a Phosphoserine.

Belongs to the phosphatase and actin regulator family. Binds PPP1CA and actin.

The protein localises to the cytoplasm. It is found in the cell projection. Its subcellular location is the lamellipodium. Its function is as follows. Regulator of protein phosphatase 1 (PP1) required for neural tube and optic fissure closure, and enteric neural crest cell (ENCCs) migration during development. Acts as an activator of PP1 by interacting with PPP1CA and preventing phosphorylation of PPP1CA at 'Thr-320'. During neural tube closure, localizes to the ventral neural tube and activates PP1, leading to down-regulate cell proliferation within cranial neural tissue and the neural retina. Also acts as a regulator of migration of enteric neural crest cells (ENCCs) by activating PP1, leading to dephosphorylation and subsequent activation of cofilin (COF1 or COF2) and repression of the integrin signaling through the RHO/ROCK pathway. This is Phosphatase and actin regulator 4 (PHACTR4) from Bos taurus (Bovine).